The primary structure comprises 352 residues: Protein-glutamate methylesterase/protein-glutamine glutaminase 2 (352 aa).

The 116-residue stretch at 1–116 folds into the Response regulatory domain; that stretch reads MIVDDSAIVR…KDFIQDAASD (116 aa). A 4-aspartylphosphate modification is found at aspartate 50. The CheB-type methylesterase domain maps to 159 to 351; it reads SKTTEHVVAI…QEIMRYAHLK (193 aa). Active-site residues include serine 171, histidine 197, and aspartate 293.

It belongs to the CheB family. Post-translationally, phosphorylated by CheA. Phosphorylation of the N-terminal regulatory domain activates the methylesterase activity.

The protein localises to the cytoplasm. The catalysed reaction is [protein]-L-glutamate 5-O-methyl ester + H2O = L-glutamyl-[protein] + methanol + H(+). It carries out the reaction L-glutaminyl-[protein] + H2O = L-glutamyl-[protein] + NH4(+). In terms of biological role, involved in chemotaxis. Part of a chemotaxis signal transduction system that modulates chemotaxis in response to various stimuli. Catalyzes the demethylation of specific methylglutamate residues introduced into the chemoreceptors (methyl-accepting chemotaxis proteins or MCP) by CheR. Also mediates the irreversible deamidation of specific glutamine residues to glutamic acid. In Shewanella denitrificans (strain OS217 / ATCC BAA-1090 / DSM 15013), this protein is Protein-glutamate methylesterase/protein-glutamine glutaminase 2.